The sequence spans 310 residues: DnaJ-like protein MG002 (310 aa).

One can recognise a J domain in the interval 1 to 66 (MNLYDLLELP…KEKYDSMLKV (66 aa)).

This chain is DnaJ-like protein MG002, found in Mycoplasma genitalium (strain ATCC 33530 / DSM 19775 / NCTC 10195 / G37) (Mycoplasmoides genitalium).